We begin with the raw amino-acid sequence, 81 residues long: ATP synthase subunit c, chloroplastic (81 aa).

The next 2 helical transmembrane spans lie at 3–23 (PIIS…ASIG) and 57–77 (LAFM…LLFA).

The protein belongs to the ATPase C chain family. As to quaternary structure, F-type ATPases have 2 components, F(1) - the catalytic core - and F(0) - the membrane proton channel. F(1) has five subunits: alpha(3), beta(3), gamma(1), delta(1), epsilon(1). F(0) has four main subunits: a(1), b(1), b'(1) and c(10-14). The alpha and beta chains form an alternating ring which encloses part of the gamma chain. F(1) is attached to F(0) by a central stalk formed by the gamma and epsilon chains, while a peripheral stalk is formed by the delta, b and b' chains.

Its subcellular location is the plastid. It localises to the chloroplast thylakoid membrane. Functionally, f(1)F(0) ATP synthase produces ATP from ADP in the presence of a proton or sodium gradient. F-type ATPases consist of two structural domains, F(1) containing the extramembraneous catalytic core and F(0) containing the membrane proton channel, linked together by a central stalk and a peripheral stalk. During catalysis, ATP synthesis in the catalytic domain of F(1) is coupled via a rotary mechanism of the central stalk subunits to proton translocation. Key component of the F(0) channel; it plays a direct role in translocation across the membrane. A homomeric c-ring of between 10-14 subunits forms the central stalk rotor element with the F(1) delta and epsilon subunits. This is ATP synthase subunit c, chloroplastic from Welwitschia mirabilis (Tree tumbo).